The primary structure comprises 590 residues: tRNA-guanine(15) transglycosylase (590 aa).

The Nucleophile role is filled by D90. D125 provides a ligand contact to substrate. 3 residues coordinate Zn(2+): C278, C280, and C283. Positions 502 to 577 constitute a PUA domain; it reads KGRVVVKGLF…HPFIIIRRHV (76 aa).

Belongs to the archaeosine tRNA-ribosyltransferase family. Requires Zn(2+) as cofactor.

The catalysed reaction is guanosine(15) in tRNA + 7-cyano-7-deazaguanine = 7-cyano-7-carbaguanosine(15) in tRNA + guanine. It participates in tRNA modification; archaeosine-tRNA biosynthesis. Its function is as follows. Exchanges the guanine residue with 7-cyano-7-deazaguanine (preQ0) at position 15 in the dihydrouridine loop (D-loop) of archaeal tRNAs. This chain is tRNA-guanine(15) transglycosylase, found in Korarchaeum cryptofilum (strain OPF8).